The chain runs to 141 residues: MAKKVEKLVKLQIPAGKATPAPPVGPALGQAGINIMGFTKEFNARTADQAGMIIPVVISVYEDKSFDFITKTPPAAVLLKKAAGVEKGSGEPNKTKVATVTRAQVQEIAETKMPDLNAANLESAMRMIEGTARSMGFTVTD.

Belongs to the universal ribosomal protein uL11 family. In terms of assembly, part of the ribosomal stalk of the 50S ribosomal subunit. Interacts with L10 and the large rRNA to form the base of the stalk. L10 forms an elongated spine to which L12 dimers bind in a sequential fashion forming a multimeric L10(L12)X complex. Post-translationally, one or more lysine residues are methylated.

In terms of biological role, forms part of the ribosomal stalk which helps the ribosome interact with GTP-bound translation factors. This chain is Large ribosomal subunit protein uL11, found in Streptococcus agalactiae serotype III (strain NEM316).